We begin with the raw amino-acid sequence, 176 residues long: Translation initiation factor IF-3 (176 aa).

The protein belongs to the IF-3 family. As to quaternary structure, monomer.

It localises to the cytoplasm. In terms of biological role, IF-3 binds to the 30S ribosomal subunit and shifts the equilibrium between 70S ribosomes and their 50S and 30S subunits in favor of the free subunits, thus enhancing the availability of 30S subunits on which protein synthesis initiation begins. The protein is Translation initiation factor IF-3 of Nitratidesulfovibrio vulgaris (strain ATCC 29579 / DSM 644 / CCUG 34227 / NCIMB 8303 / VKM B-1760 / Hildenborough) (Desulfovibrio vulgaris).